The following is a 1178-amino-acid chain: Pyruvate carboxylase, mitochondrial (1178 aa).

Residues 1–20 constitute a mitochondrion transit peptide; sequence MLKFQTVRGGLRLLGVRRSS. Serine 21 is modified (phosphoserine). An N6-acetyllysine mark is found at lysine 35 and lysine 39. The Biotin carboxylation domain maps to 36–486; that stretch reads PIKKVMVANR…DTQFIDENPE (451 aa). An N6-acetyllysine; alternate modification is found at lysine 79. At lysine 79 the chain carries N6-succinyllysine; alternate. 2 positions are modified to N6-acetyllysine: lysine 148 and lysine 152. 2 residues coordinate ATP: lysine 152 and glutamate 236. Residues 156–353 enclose the ATP-grasp domain; the sequence is RAIAIAAGVP…LVHAQIHVSE (198 aa). Lysine 241 is modified (N6-acetyllysine). An ATP-binding site is contributed by histidine 271. N6-acetyllysine is present on residues lysine 297, lysine 316, and lysine 319. Arginine 328 is an active-site residue. Lysine 434 is subject to N6-acetyllysine. Residue lysine 442 is modified to N6-succinyllysine. The 270-residue stretch at 563–832 folds into the Pyruvate carboxyltransferase domain; sequence LLLMDTTFRD…DTEVPLERVF (270 aa). Substrate is bound at residue 571–575; sequence RDAHQ. Aspartate 572 is a binding site for Mn(2+). Position 589 is an N6-acetyllysine (lysine 589). Arginine 644 is a binding site for substrate. An N6-acetyllysine mark is found at lysine 661 and lysine 717. Lysine 741 contributes to the Mn(2+) binding site. Lysine 741 carries the post-translational modification N6-carboxylysine. Lysine 748 carries the N6-acetyllysine modification. Mn(2+) is bound by residues histidine 771 and histidine 773. An N6-acetyllysine modification is found at lysine 892. Residue threonine 908 participates in substrate binding. Lysine 969 carries the post-translational modification N6-acetyllysine. Lysine 988 bears the N6-acetyllysine; alternate mark. N6-succinyllysine; alternate is present on lysine 988. Position 992 is an N6-acetyllysine (lysine 992). Position 1003 is a phosphothreonine (threonine 1003). Residues lysine 1061, lysine 1090, and lysine 1124 each carry the N6-acetyllysine modification. One can recognise a Biotinyl-binding domain in the interval 1109–1178; the sequence is KGQIGAPMPG…EGDDLILEIE (70 aa). The residue at position 1144 (lysine 1144) is an N6-biotinyllysine.

In terms of assembly, homotetramer. Interacts (via the biotin carboxylation domain) with SIRT4. Biotin serves as cofactor. The cofactor is Mn(2+). Acetylation of Lys-316 is observed in liver mitochondria from fasted mice but not from fed mice. Acetylation of Lys-748 might play a role in catalytic activity regulation. In terms of tissue distribution, liver, kidney, adipose tissue, liver and brain.

The protein localises to the mitochondrion matrix. The catalysed reaction is hydrogencarbonate + pyruvate + ATP = oxaloacetate + ADP + phosphate + H(+). It functions in the pathway carbohydrate biosynthesis; gluconeogenesis. Pyruvate carboxylase catalyzes a 2-step reaction, involving the ATP-dependent carboxylation of the covalently attached biotin in the first step and the transfer of the carboxyl group to pyruvate in the second. Catalyzes in a tissue specific manner, the initial reactions of glucose (liver, kidney) and lipid (adipose tissue, liver, brain) synthesis from pyruvate. This Mus musculus (Mouse) protein is Pyruvate carboxylase, mitochondrial (Pc).